The following is a 116-amino-acid chain: T cell receptor alpha variable 38-1 (116 aa).

A signal peptide spans 1-21 (MTRVSLLWAVVVSTCLESGMA). Residues 22–116 (QTVTQSQPEM…TAMYFCAFMK (95 aa)) enclose the Ig-like domain. C43 and C112 are oxidised to a cystine. The N-linked (GlcNAc...) asparagine glycan is linked to N78.

As to quaternary structure, alpha-beta TR is a heterodimer composed of an alpha and beta chain; disulfide-linked. The alpha-beta TR is associated with the transmembrane signaling CD3 coreceptor proteins to form the TR-CD3 (TcR or TCR). The assembly of alpha-beta TR heterodimers with CD3 occurs in the endoplasmic reticulum where a single alpha-beta TR heterodimer associates with one CD3D-CD3E heterodimer, one CD3G-CD3E heterodimer and one CD247 homodimer forming a stable octameric structure. CD3D-CD3E and CD3G-CD3E heterodimers preferentially associate with TR alpha and TR beta chains, respectively. The association of the CD247 homodimer is the last step of TcR assembly in the endoplasmic reticulum and is required for transport to the cell surface.

The protein localises to the cell membrane. In terms of biological role, v region of the variable domain of T cell receptor (TR) alpha chain that participates in the antigen recognition. Alpha-beta T cell receptors are antigen specific receptors which are essential to the immune response and are present on the cell surface of T lymphocytes. Recognize peptide-major histocompatibility (MH) (pMH) complexes that are displayed by antigen presenting cells (APC), a prerequisite for efficient T cell adaptive immunity against pathogens. Binding of alpha-beta TR to pMH complex initiates TR-CD3 clustering on the cell surface and intracellular activation of LCK that phosphorylates the ITAM motifs of CD3G, CD3D, CD3E and CD247 enabling the recruitment of ZAP70. In turn ZAP70 phosphorylates LAT, which recruits numerous signaling molecules to form the LAT signalosome. The LAT signalosome propagates signal branching to three major signaling pathways, the calcium, the mitogen-activated protein kinase (MAPK) kinase and the nuclear factor NF-kappa-B (NF-kB) pathways, leading to the mobilization of transcription factors that are critical for gene expression and essential for T cell growth and differentiation. The T cell repertoire is generated in the thymus, by V-(D)-J rearrangement. This repertoire is then shaped by intrathymic selection events to generate a peripheral T cell pool of self-MH restricted, non-autoaggressive T cells. Post-thymic interaction of alpha-beta TR with the pMH complexes shapes TR structural and functional avidity. This Homo sapiens (Human) protein is T cell receptor alpha variable 38-1.